Reading from the N-terminus, the 583-residue chain is CTP synthase (583 aa).

The interval M1–L278 is amidoligase domain. S20 is a binding site for CTP. Position 20 (S20) interacts with UTP. ATP-binding positions include S21–L26 and D78. Mg(2+) is bound by residues D78 and E152. CTP is bound by residues D159 to E161, K199 to Q204, and K235. UTP contacts are provided by residues K199–Q204 and K235. The region spanning R303 to G551 is the Glutamine amidotransferase type-1 domain. L-glutamine is bound at residue G366. Catalysis depends on C393, which acts as the Nucleophile; for glutamine hydrolysis. L-glutamine contacts are provided by residues L394–Q397, E416, and R477. Residues H524 and E526 contribute to the active site. Positions P559 to G583 are disordered.

The protein belongs to the CTP synthase family. In terms of assembly, homotetramer.

It carries out the reaction UTP + L-glutamine + ATP + H2O = CTP + L-glutamate + ADP + phosphate + 2 H(+). The enzyme catalyses L-glutamine + H2O = L-glutamate + NH4(+). It catalyses the reaction UTP + NH4(+) + ATP = CTP + ADP + phosphate + 2 H(+). It functions in the pathway pyrimidine metabolism; CTP biosynthesis via de novo pathway; CTP from UDP: step 2/2. With respect to regulation, allosterically activated by GTP, when glutamine is the substrate; GTP has no effect on the reaction when ammonia is the substrate. The allosteric effector GTP functions by stabilizing the protein conformation that binds the tetrahedral intermediate(s) formed during glutamine hydrolysis. Inhibited by the product CTP, via allosteric rather than competitive inhibition. In terms of biological role, catalyzes the ATP-dependent amination of UTP to CTP with either L-glutamine or ammonia as the source of nitrogen. Regulates intracellular CTP levels through interactions with the four ribonucleotide triphosphates. This is CTP synthase from Mycobacterium ulcerans (strain Agy99).